Reading from the N-terminus, the 115-residue chain is Superoxide reductase (115 aa).

Fe cation-binding residues include Glu-14, His-16, His-41, His-47, Cys-102, and His-105.

This sequence belongs to the desulfoferrodoxin family. Homotetramer. Requires Fe cation as cofactor.

The catalysed reaction is reduced [rubredoxin] + superoxide + 2 H(+) = oxidized [rubredoxin] + H2O2. Uses electrons from reduced NADP, by way of rubredoxin and an oxidoreductase, to catalyze the reduction of superoxide to hydrogen peroxide. This Thermococcus kodakarensis (strain ATCC BAA-918 / JCM 12380 / KOD1) (Pyrococcus kodakaraensis (strain KOD1)) protein is Superoxide reductase (sorA).